We begin with the raw amino-acid sequence, 175 residues long: ATP synthase subunit d, mitochondrial (175 aa).

An N-acetylserine modification is found at Ser-2.

In terms of assembly, F-type ATP synthases have 2 components, the catalytic core F(1) and the membrane-embedded component F(0), linked together by a central stalk and a peripheral stalk. The central stalk, also called rotor shaft, is often seen as part of F(1). The peripheral stalk is seen as part of F(0). F(0) contains the membrane channel next to the rotor. F-type ATP synthases form dimers but each monomer functions independently in ATP generation. The dimer consists of 18 different polypeptides: ATP1 (subunit alpha, part of F(1), 3 molecules per monomer), ATP2 (subunit beta, part of F(1), 3 molecules per monomer), ATP3 (subunit gamma, part of the central stalk), ATP4 (subunit b, part of the peripheral stalk), ATP5/OSCP (subunit 5/OSCP, part of the peripheral stalk), ATP6 (subunit a, part of the peripheral stalk), ATP7 (subunit d, part of the peripheral stalk), ATP8 (subunit 8, part of the peripheral stalk), OLI1 (subunit c, part of the rotor, 10 molecules per monomer), ATP14 (subunit h, part of the peripheral stalk), ATP15 (subunit epsilon, part of the central stalk), ATP16 (subunit delta, part of the central stalk), ATP17 (subunit f, part of the peripheral stalk), ATP18 (subunit i/j, part of the peripheral stalk). Dimer-specific subunits are ATP19 (subunit k, at interface between monomers), ATP20 (subunit g, at interface between monomers), TIM11 (subunit e, at interface between monomers). Also contains subunit L.

The protein resides in the mitochondrion inner membrane. Mitochondrial membrane ATP synthase (F(1)F(0) ATP synthase or Complex V) produces ATP from ADP in the presence of a proton gradient across the membrane which is generated by electron transport complexes of the respiratory chain. F-type ATP synthases consist of two structural domains, F(1) - containing the extramembraneous catalytic core, and F(0) - containing the membrane proton channel, linked together by a central stalk and a peripheral stalk. During catalysis, ATP synthesis in the catalytic domain of F(1) is coupled via a rotary mechanism of the central stalk subunits to proton translocation. Part of the complex F(0) domain and the peripheral stalk, which acts as a stator to hold the catalytic alpha/ATP1(3)beta/ATP2(3) subcomplex and subunit a/ATP6 static relative to the rotary elements. This chain is ATP synthase subunit d, mitochondrial, found in Pichia angusta (Yeast).